The sequence spans 345 residues: tRNA N6-adenosine threonylcarbamoyltransferase (345 aa).

2 residues coordinate Fe cation: His111 and His115. Residues 134–138 (LVSGG), Asp167, Gly180, and Asn276 each bind substrate. Asp304 contributes to the Fe cation binding site.

This sequence belongs to the KAE1 / TsaD family. It depends on Fe(2+) as a cofactor.

It is found in the cytoplasm. The enzyme catalyses L-threonylcarbamoyladenylate + adenosine(37) in tRNA = N(6)-L-threonylcarbamoyladenosine(37) in tRNA + AMP + H(+). Functionally, required for the formation of a threonylcarbamoyl group on adenosine at position 37 (t(6)A37) in tRNAs that read codons beginning with adenine. Is involved in the transfer of the threonylcarbamoyl moiety of threonylcarbamoyl-AMP (TC-AMP) to the N6 group of A37, together with TsaE and TsaB. TsaD likely plays a direct catalytic role in this reaction. The protein is tRNA N6-adenosine threonylcarbamoyltransferase of Bordetella avium (strain 197N).